Consider the following 123-residue polypeptide: Large ribosomal subunit protein bL12 (123 aa).

It belongs to the bacterial ribosomal protein bL12 family. Homodimer. Part of the ribosomal stalk of the 50S ribosomal subunit. Forms a multimeric L10(L12)X complex, where L10 forms an elongated spine to which 2 to 4 L12 dimers bind in a sequential fashion. Binds GTP-bound translation factors.

In terms of biological role, forms part of the ribosomal stalk which helps the ribosome interact with GTP-bound translation factors. Is thus essential for accurate translation. The polypeptide is Large ribosomal subunit protein bL12 (Chlorobium luteolum (strain DSM 273 / BCRC 81028 / 2530) (Pelodictyon luteolum)).